Here is a 332-residue protein sequence, read N- to C-terminus: MQQMATGLAVTGCGSAAPETSLDNHGLSQIVDTSDEWIASRTGIRSRHLAGPDDTLAKLGAIAAQNALEMAQVEATDLDLILLATSTPDDLFGSACQIQAAIGAKHAVAFDLTAACSGFVFGMITAAQFIRTGVYRNVLLVGADVLSRWVDWTDRRSCVLFGDGAGAVVLQANDTDRLLGFALHSDGCLHDCLNVQYQGEARPLTGEINVSQGTYQPISMNGKEVYRFAVNRVPEVVEKALFQSDLKTDDIDWLLLHQANQRILDAVAKRLKVPAEKVISNIANYGNTSAATIPLALDATVRKGHIKPGDTIAASGFGAGLSWGAAIFQWQR.

Catalysis depends on residues cysteine 116 and histidine 257. An ACP-binding region spans residues 258 to 262 (QANQR). Residue asparagine 287 is part of the active site.

This sequence belongs to the thiolase-like superfamily. FabH family. In terms of assembly, homodimer.

Its subcellular location is the cytoplasm. The catalysed reaction is malonyl-[ACP] + acetyl-CoA + H(+) = 3-oxobutanoyl-[ACP] + CO2 + CoA. Its pathway is lipid metabolism; fatty acid biosynthesis. Its function is as follows. Catalyzes the condensation reaction of fatty acid synthesis by the addition to an acyl acceptor of two carbons from malonyl-ACP. Catalyzes the first condensation reaction which initiates fatty acid synthesis and may therefore play a role in governing the total rate of fatty acid production. Possesses both acetoacetyl-ACP synthase and acetyl transacylase activities. Its substrate specificity determines the biosynthesis of branched-chain and/or straight-chain of fatty acids. The chain is Beta-ketoacyl-[acyl-carrier-protein] synthase III from Acaryochloris marina (strain MBIC 11017).